The following is a 115-amino-acid chain: MIVGIGVDVVDIERFGRQLERTPGLRDRLFVPAERELNTRSLAARFAAKEAVAKVLGAPAGMNWQDCWIGLDHNGPTVQVKGTVLAVAEAKGVKRWHLSISHDGGIATATVLAEG.

Mg(2+)-binding residues include Asp-8 and Glu-50.

Belongs to the P-Pant transferase superfamily. AcpS family. Mg(2+) serves as cofactor.

The protein resides in the cytoplasm. The enzyme catalyses apo-[ACP] + CoA = holo-[ACP] + adenosine 3',5'-bisphosphate + H(+). Its function is as follows. Transfers the 4'-phosphopantetheine moiety from coenzyme A to a Ser of acyl-carrier-protein. The protein is Holo-[acyl-carrier-protein] synthase of Pseudarthrobacter chlorophenolicus (strain ATCC 700700 / DSM 12829 / CIP 107037 / JCM 12360 / KCTC 9906 / NCIMB 13794 / A6) (Arthrobacter chlorophenolicus).